The following is a 448-amino-acid chain: Tubulin beta-1 chain (448 aa).

GTP contacts are provided by Gln11, Glu69, Ser138, Gly142, Thr143, Gly144, Asn204, and Asn226. Residue Glu69 coordinates Mg(2+). Residues 428–448 (AGIGDDEEEDEEGVMGEEIDA) form a disordered region. Acidic residues predominate over residues 430–448 (IGDDEEEDEEGVMGEEIDA).

This sequence belongs to the tubulin family. As to quaternary structure, dimer of alpha and beta chains. A typical microtubule is a hollow water-filled tube with an outer diameter of 25 nm and an inner diameter of 15 nM. Alpha-beta heterodimers associate head-to-tail to form protofilaments running lengthwise along the microtubule wall with the beta-tubulin subunit facing the microtubule plus end conferring a structural polarity. Microtubules usually have 13 protofilaments but different protofilament numbers can be found in some organisms and specialized cells. Requires Mg(2+) as cofactor.

The protein localises to the cytoplasm. The protein resides in the cytoskeleton. Tubulin is the major constituent of microtubules, a cylinder consisting of laterally associated linear protofilaments composed of alpha- and beta-tubulin heterodimers. Microtubules grow by the addition of GTP-tubulin dimers to the microtubule end, where a stabilizing cap forms. Below the cap, tubulin dimers are in GDP-bound state, owing to GTPase activity of alpha-tubulin. This Echinococcus multilocularis (Fox tapeworm) protein is Tubulin beta-1 chain (TUB-1).